Here is a 103-residue protein sequence, read N- to C-terminus: MISVPIEYYLVVAAVLFLIGSIGFLLRRNLLVLLMSIELMLNAVNLTLVAYNRVHPHDHAGQIFTFFVIAIAAAEAAVGLAIVLAFYRIRKTMRSDDADLLRS.

3 helical membrane passes run 6 to 26 (IEYYLVVAAVLFLIGSIGFLL), 30 to 50 (LLVLLMSIELMLNAVNLTLVA), and 66 to 86 (FFVIAIAAAEAAVGLAIVLAF).

This sequence belongs to the complex I subunit 4L family. NDH-1 is composed of 14 different subunits. Subunits NuoA, H, J, K, L, M, N constitute the membrane sector of the complex.

The protein localises to the cell inner membrane. The enzyme catalyses a quinone + NADH + 5 H(+)(in) = a quinol + NAD(+) + 4 H(+)(out). Its function is as follows. NDH-1 shuttles electrons from NADH, via FMN and iron-sulfur (Fe-S) centers, to quinones in the respiratory chain. The immediate electron acceptor for the enzyme in this species is believed to be ubiquinone. Couples the redox reaction to proton translocation (for every two electrons transferred, four hydrogen ions are translocated across the cytoplasmic membrane), and thus conserves the redox energy in a proton gradient. The polypeptide is NADH-quinone oxidoreductase subunit K (Sorangium cellulosum (strain So ce56) (Polyangium cellulosum (strain So ce56))).